The chain runs to 169 residues: Protein Flattop homolog (169 aa).

The disordered stretch occupies residues 53-169 (IPRSSRSPWG…SPKLATPEPC (117 aa)). The span at 119–130 (VQASPRNASPLQ) shows a compositional bias: polar residues.

Belongs to the Flattop family.

The protein resides in the cytoplasm. It localises to the cytoskeleton. Its subcellular location is the cilium basal body. The protein localises to the cell projection. It is found in the cilium. The protein resides in the apical cell membrane. In terms of biological role, acts as a regulator of cilium basal body docking and positioning in mono- and multiciliated cells. The sequence is that of Protein Flattop homolog from Nematostella vectensis (Starlet sea anemone).